Consider the following 82-residue polypeptide: uncharacterized protein (82 aa).

This is an uncharacterized protein from Ictalurid herpesvirus 1 (strain Auburn) (IcHV-1).